The chain runs to 290 residues: 4-hydroxybenzoate octaprenyltransferase (290 aa).

Transmembrane regions (helical) follow at residues 23-43 (IGALLLLWPTLWALWVATPGM), 46-66 (LWILAVFVAGVWLMRAAGCVV), 99-119 (LFVVLVLLAFLLVLTLNAMTI), 141-161 (LPQVVLGAAFGWSIPMAFAAV), 163-183 (ESLPLSCWLMFLANILWAVAY), 212-232 (TLIIGILQLGVMALMALIGWL), 233-253 (NGLGWGYYWAVLVAGALFVYQ), and 268-288 (AFMNNNYVGLVLFLGLAMSYW).

Belongs to the UbiA prenyltransferase family. It depends on Mg(2+) as a cofactor.

The protein localises to the cell inner membrane. The catalysed reaction is all-trans-octaprenyl diphosphate + 4-hydroxybenzoate = 4-hydroxy-3-(all-trans-octaprenyl)benzoate + diphosphate. It functions in the pathway cofactor biosynthesis; ubiquinone biosynthesis. Catalyzes the prenylation of para-hydroxybenzoate (PHB) with an all-trans polyprenyl group. Mediates the second step in the final reaction sequence of ubiquinone-8 (UQ-8) biosynthesis, which is the condensation of the polyisoprenoid side chain with PHB, generating the first membrane-bound Q intermediate 3-octaprenyl-4-hydroxybenzoate. This is 4-hydroxybenzoate octaprenyltransferase from Salmonella typhi.